We begin with the raw amino-acid sequence, 718 residues long: Sec-independent protein translocase protein TatCt (718 aa).

8 helical membrane-spanning segments follow: residues Val-34–Trp-54, Ile-84–Ile-104, Leu-137–Leu-157, Phe-178–Gly-198, Trp-214–Pro-231, Phe-234–Ala-254, Leu-280–Val-300, and Leu-325–Val-345. The interval Arg-421–Thr-451 is disordered. The segment covering Ala-425–Glu-434 has biased composition (acidic residues). Transmembrane regions (helical) follow at residues Ala-478 to Thr-498, Phe-539 to Ala-559, Thr-572 to Tyr-592, Phe-621 to Leu-641, Glu-661 to Met-681, and Phe-682 to Leu-702.

It belongs to the TatC family. In terms of assembly, forms a complex with TatA.

It is found in the cell membrane. Part of the twin-arginine translocation (Tat) system that transports large folded proteins containing a characteristic twin-arginine motif in their signal peptide across membranes. The sequence is that of Sec-independent protein translocase protein TatCt from Haloferax volcanii (strain ATCC 29605 / DSM 3757 / JCM 8879 / NBRC 14742 / NCIMB 2012 / VKM B-1768 / DS2) (Halobacterium volcanii).